Reading from the N-terminus, the 163-residue chain is Neurotrophin-3 (163 aa).

An N-terminal signal peptide occupies residues Ile1 to Ser3. Positions Thr4 to Arg119 are excised as a propeptide. An N-linked (GlcNAc...) asparagine glycan is attached at Asn112.

This sequence belongs to the NGF-beta family.

The protein resides in the secreted. Functionally, seems to promote the survival of visceral and proprioceptive sensory neurons. The protein is Neurotrophin-3 (NTF3) of Eryx colubrinus colubrinus.